A 131-amino-acid polypeptide reads, in one-letter code: Small ribosomal subunit protein uS8 (131 aa).

The protein belongs to the universal ribosomal protein uS8 family. Part of the 30S ribosomal subunit. Contacts proteins S5 and S12.

Functionally, one of the primary rRNA binding proteins, it binds directly to 16S rRNA central domain where it helps coordinate assembly of the platform of the 30S subunit. The chain is Small ribosomal subunit protein uS8 from Acinetobacter baumannii (strain AB307-0294).